The primary structure comprises 543 residues: Cytochrome P450 307a1 (543 aa).

Residue S219 is modified to Phosphoserine. Residues F440–E460 are disordered. Residues P449–E460 are compositionally biased toward polar residues. A heme-binding site is contributed by C485.

The protein belongs to the cytochrome P450 family. It depends on heme as a cofactor.

The protein resides in the endoplasmic reticulum membrane. The protein localises to the microsome membrane. Functionally, required for correct development of the embryonic midline glial cells which are necessary for the formation of distinct segmental commissures. This chain is Cytochrome P450 307a1 (spo), found in Drosophila melanogaster (Fruit fly).